Here is a 130-residue protein sequence, read N- to C-terminus: Small ribosomal subunit protein uS8 (130 aa).

The protein belongs to the universal ribosomal protein uS8 family. In terms of assembly, part of the 30S ribosomal subunit. Contacts proteins S5 and S12.

Its function is as follows. One of the primary rRNA binding proteins, it binds directly to 16S rRNA central domain where it helps coordinate assembly of the platform of the 30S subunit. The protein is Small ribosomal subunit protein uS8 of Buchnera aphidicola subsp. Baizongia pistaciae (strain Bp).